Consider the following 385-residue polypeptide: Transcription factor-like protein DPB (385 aa).

Disordered regions lie at residues 1–53 (MTTT…EQTI) and 71–102 (DIQGDDAGSQGASGVKKKKRGQRAAGPDKTGR). Residues 22–31 (PSTRSWGTAV) show a composition bias toward polar residues. Residues 32-53 (SGQSVSTSGSMGSPSSRSEQTI) are compositionally biased toward low complexity. Residues 101–184 (GRGLRQFSMK…KKEIQWRGLP (84 aa)) mediate DNA binding. A DEF box motif is present at residues 150 to 184 (DEKNIRRRVYDALNVLMAMDIISKDKKEIQWRGLP). The stretch at 185-234 (RTSLSDIEELKNERLSLRNRIEKKTAYSQELEEQYVGLQNLIQRNEHLYS) forms a coiled coil. Positions 296–385 (PPQQPNGRNN…IMNSSMKPEN (90 aa)) are disordered. The segment covering 300–327 (PNGRNNSQLVCHNFTPENPNKGPSTGPT) has biased composition (polar residues). A compositionally biased stretch (low complexity) spans 336–349 (HLQSQQHQQHSQLQ). Over residues 355-364 (ETNNVTSSAD) the composition is skewed to polar residues.

The protein belongs to the E2F/DP family. As to quaternary structure, heterodimer with non-phosphorylated E2FC. No interaction with phosphorylated E2FC. Interacts preferentially with E2FC, but also with E2FA and E2FB. Interacts with SKP2A. Targeted for proteasomal degradation by the SCF(SKP2A) E3 ubiquitin ligase complex. In terms of processing, phosphorylated. Ubiquitous.

It localises to the nucleus. It is found in the cytoplasm. Its function is as follows. Involved in the regulation of the G1/S transition. Increases the DNA binding activity of E2F proteins after heterodimerization. The complex DPB/E2FC restricts cell division and lateral root initiation and may function as a negative regulator of E2F-regulated genes. The interaction with SKP2A is controlled by auxin. This Arabidopsis thaliana (Mouse-ear cress) protein is Transcription factor-like protein DPB (DPB).